Consider the following 496-residue polypeptide: Glycogen synthase (496 aa).

Lys-15 contacts ADP-alpha-D-glucose.

It belongs to the glycosyltransferase 1 family. Bacterial/plant glycogen synthase subfamily.

It catalyses the reaction [(1-&gt;4)-alpha-D-glucosyl](n) + ADP-alpha-D-glucose = [(1-&gt;4)-alpha-D-glucosyl](n+1) + ADP + H(+). It participates in glycan biosynthesis; glycogen biosynthesis. In terms of biological role, synthesizes alpha-1,4-glucan chains using ADP-glucose. The chain is Glycogen synthase from Natranaerobius thermophilus (strain ATCC BAA-1301 / DSM 18059 / JW/NM-WN-LF).